The chain runs to 119 residues: uncharacterized protein (119 aa).

C9 and C12 are joined by a disulfide.

The protein belongs to the ArsC family.

This is an uncharacterized protein from Streptomyces viridochromogenes.